The chain runs to 290 residues: Putative OX-2 membrane glycoprotein homolog (290 aa).

An N-terminal signal peptide occupies residues 1 to 17; that stretch reads MSSLMLRLLPLLYIISA. Over 18–267 the chain is Extracellular; it reads HFVLHPETSP…SDETVFTWTV (250 aa). The 113-residue stretch at 23 to 135 folds into the Ig-like V-type domain; sequence PETSPSLIYE…TFTVDNEKTS (113 aa). A disulfide bond links Cys41 and Cys125. N-linked (GlcNAc...) asparagine; by host glycans are attached at residues Asn71, Asn104, Asn194, and Asn202. The Ig-like C2-type domain occupies 146–236; the sequence is PIVVLYFRYL…TNQKASALVT (91 aa). Residues 268 to 288 form a helical membrane-spanning segment; sequence PLILILISVIVLLISVCIVAF. The Cytoplasmic segment spans residues 289 to 290; that stretch reads KS.

Its subcellular location is the membrane. This is Putative OX-2 membrane glycoprotein homolog (U85) from Homo sapiens (Human).